The sequence spans 208 residues: MMLITTSHRPTRRTRSFGHDLEKVFPNSLYLTRGKKTIQDLLMEAYDRGYERLLIINVWKGNPLKMTFIKVDPEDWGYIGYLYLHGIKLQREIGFRNIPPIREEMPFVVTTAKRVGIDHTAFAQVFAELTGGKFVPRGNKSLQTIADKNNTDVIGVIENYPRGMAVNFYRFDITRERPVGPLILVKIWIMEDGRRWDYKEALGIKPKE.

Positions 1–196 (MMLITTSHRP…IWIMEDGRRW (196 aa)) constitute a Brix domain.

Probably involved in the biogenesis of the ribosome. In Thermococcus kodakarensis (strain ATCC BAA-918 / JCM 12380 / KOD1) (Pyrococcus kodakaraensis (strain KOD1)), this protein is Probable Brix domain-containing ribosomal biogenesis protein.